A 208-amino-acid polypeptide reads, in one-letter code: Holliday junction branch migration complex subunit RuvA (208 aa).

Residues 1–67 (MIGWLHGTIG…EDGQQLYGFE (67 aa)) form a domain I region. The domain II stretch occupies residues 68-146 (TKADRNLFRL…ERWQQQGGST (79 aa)). The segment at 147–157 (PLRLVEPVAES) is flexible linker. The interval 157-208 (SRELRATLEALGYGPEEVSAAVAQAGSQGLDPEQPMEEWLRHCLAWLSRQAG) is domain III.

The protein belongs to the RuvA family. As to quaternary structure, homotetramer. Forms an RuvA(8)-RuvB(12)-Holliday junction (HJ) complex. HJ DNA is sandwiched between 2 RuvA tetramers; dsDNA enters through RuvA and exits via RuvB. An RuvB hexamer assembles on each DNA strand where it exits the tetramer. Each RuvB hexamer is contacted by two RuvA subunits (via domain III) on 2 adjacent RuvB subunits; this complex drives branch migration. In the full resolvosome a probable DNA-RuvA(4)-RuvB(12)-RuvC(2) complex forms which resolves the HJ.

The protein localises to the cytoplasm. The RuvA-RuvB-RuvC complex processes Holliday junction (HJ) DNA during genetic recombination and DNA repair, while the RuvA-RuvB complex plays an important role in the rescue of blocked DNA replication forks via replication fork reversal (RFR). RuvA specifically binds to HJ cruciform DNA, conferring on it an open structure. The RuvB hexamer acts as an ATP-dependent pump, pulling dsDNA into and through the RuvAB complex. HJ branch migration allows RuvC to scan DNA until it finds its consensus sequence, where it cleaves and resolves the cruciform DNA. The sequence is that of Holliday junction branch migration complex subunit RuvA from Synechococcus sp. (strain RCC307).